Here is a 210-residue protein sequence, read N- to C-terminus: Cell division protein SepF (210 aa).

The disordered stretch occupies residues glycine 13 to methionine 78. The span at tyrosine 22–aspartate 31 shows a compositional bias: acidic residues. Basic and acidic residues predominate over residues arginine 47–methionine 60. Polar residues predominate over residues valine 64 to methionine 78.

It belongs to the SepF family. Homodimer. Interacts with FtsZ.

The protein resides in the cytoplasm. In terms of biological role, cell division protein that is part of the divisome complex and is recruited early to the Z-ring. Probably stimulates Z-ring formation, perhaps through the cross-linking of FtsZ protofilaments. Its function overlaps with FtsA. The sequence is that of Cell division protein SepF from Cyanothece sp. (strain PCC 7425 / ATCC 29141).